Consider the following 31-residue polypeptide: Photosystem I reaction center subunit XII (31 aa).

Residues 7–26 form a helical membrane-spanning segment; that stretch reads QVYIALLTALIPAFFALKLG.

It belongs to the PsaM family.

It is found in the plastid. Its subcellular location is the chloroplast thylakoid membrane. The chain is Photosystem I reaction center subunit XII from Euglena viridis (Cercaria viridis).